A 291-amino-acid polypeptide reads, in one-letter code: ATP phosphoribosyltransferase 1 (291 aa).

This sequence belongs to the ATP phosphoribosyltransferase family. Long subfamily. Mg(2+) is required as a cofactor.

It is found in the cytoplasm. The enzyme catalyses 1-(5-phospho-beta-D-ribosyl)-ATP + diphosphate = 5-phospho-alpha-D-ribose 1-diphosphate + ATP. It participates in amino-acid biosynthesis; L-histidine biosynthesis; L-histidine from 5-phospho-alpha-D-ribose 1-diphosphate: step 1/9. With respect to regulation, feedback inhibited by histidine. Functionally, catalyzes the condensation of ATP and 5-phosphoribose 1-diphosphate to form N'-(5'-phosphoribosyl)-ATP (PR-ATP). Has a crucial role in the pathway because the rate of histidine biosynthesis seems to be controlled primarily by regulation of HisG enzymatic activity. The sequence is that of ATP phosphoribosyltransferase 1 from Geobacter sulfurreducens (strain ATCC 51573 / DSM 12127 / PCA).